The primary structure comprises 785 residues: Endonuclease MutS2 (785 aa).

Residue 335–342 (GPNTGGKT) participates in ATP binding. The region spanning 710–785 (LDLRGERYED…GNGVTIVEFK (76 aa)) is the Smr domain.

This sequence belongs to the DNA mismatch repair MutS family. MutS2 subfamily. Homodimer. Binds to stalled ribosomes, contacting rRNA.

Endonuclease that is involved in the suppression of homologous recombination and thus may have a key role in the control of bacterial genetic diversity. Functionally, acts as a ribosome collision sensor, splitting the ribosome into its 2 subunits. Detects stalled/collided 70S ribosomes which it binds and splits by an ATP-hydrolysis driven conformational change. Acts upstream of the ribosome quality control system (RQC), a ribosome-associated complex that mediates the extraction of incompletely synthesized nascent chains from stalled ribosomes and their subsequent degradation. Probably generates substrates for RQC. The polypeptide is Endonuclease MutS2 (Listeria monocytogenes serotype 4b (strain F2365)).